A 104-amino-acid polypeptide reads, in one-letter code: Co-chaperonin GroES 2 (104 aa).

The protein belongs to the GroES chaperonin family. In terms of assembly, heptamer of 7 subunits arranged in a ring. Interacts with the chaperonin GroEL.

The protein localises to the cytoplasm. Together with the chaperonin GroEL, plays an essential role in assisting protein folding. The GroEL-GroES system forms a nano-cage that allows encapsulation of the non-native substrate proteins and provides a physical environment optimized to promote and accelerate protein folding. GroES binds to the apical surface of the GroEL ring, thereby capping the opening of the GroEL channel. The chain is Co-chaperonin GroES 2 from Mesorhizobium japonicum (strain LMG 29417 / CECT 9101 / MAFF 303099) (Mesorhizobium loti (strain MAFF 303099)).